A 512-amino-acid chain; its full sequence is 2-isopropylmalate synthase (512 aa).

One can recognise a Pyruvate carboxyltransferase domain in the interval 4–266 (IQFFDTTLRD…ETNIVLNQFK (263 aa)). 4 residues coordinate Mn(2+): Asp-13, His-201, His-203, and Asn-237. Residues 390-512 (ELKHLQVQYV…SKQADFEEVK (123 aa)) are regulatory domain.

Belongs to the alpha-IPM synthase/homocitrate synthase family. LeuA type 1 subfamily. In terms of assembly, homodimer. Requires Mn(2+) as cofactor.

The protein resides in the cytoplasm. The enzyme catalyses 3-methyl-2-oxobutanoate + acetyl-CoA + H2O = (2S)-2-isopropylmalate + CoA + H(+). It functions in the pathway amino-acid biosynthesis; L-leucine biosynthesis; L-leucine from 3-methyl-2-oxobutanoate: step 1/4. Functionally, catalyzes the condensation of the acetyl group of acetyl-CoA with 3-methyl-2-oxobutanoate (2-ketoisovalerate) to form 3-carboxy-3-hydroxy-4-methylpentanoate (2-isopropylmalate). The polypeptide is 2-isopropylmalate synthase (Listeria innocua serovar 6a (strain ATCC BAA-680 / CLIP 11262)).